The chain runs to 1148 residues: Maintenance of telomere capping protein 5 (1148 aa).

WD repeat units lie at residues 63–106 (HHIT…SNAI), 112–152 (GHSR…RPFY), 156–195 (SWRS…TPLC), 199–239 (GHVS…TESK), and 299–348 (GHSD…YGKV). The 112-residue stretch at 432–543 (EEVSAIGHKF…RFVLGEKVSL (112 aa)) folds into the RWD domain. Phosphoserine is present on S759. Positions 963-990 (THNTLNGSSKFTEPAQKQGSRAISSSPF) are disordered. Over residues 964–990 (HNTLNGSSKFTEPAQKQGSRAISSSPF) the composition is skewed to polar residues.

Belongs to the WD repeat WDR59 family. Component of the SEA complex composed of at least IML1/SEA1, RTC1/SEA2, MTC5/SEA3, NPR2, NPR3, SEA4, SEC13 and SEH1.

The protein localises to the vacuole membrane. In terms of biological role, component of the SEA complex which coats the vacuolar membrane and is involved in intracellular trafficking, autophagy, response to nitrogen starvation, and amino acid biogenesis. May be involved in telomere capping. This Saccharomyces cerevisiae (strain ATCC 204508 / S288c) (Baker's yeast) protein is Maintenance of telomere capping protein 5 (MTC5).